The chain runs to 347 residues: S-adenosylmethionine:tRNA ribosyltransferase-isomerase (347 aa).

It belongs to the QueA family. In terms of assembly, monomer.

The protein resides in the cytoplasm. It catalyses the reaction 7-aminomethyl-7-carbaguanosine(34) in tRNA + S-adenosyl-L-methionine = epoxyqueuosine(34) in tRNA + adenine + L-methionine + 2 H(+). It functions in the pathway tRNA modification; tRNA-queuosine biosynthesis. In terms of biological role, transfers and isomerizes the ribose moiety from AdoMet to the 7-aminomethyl group of 7-deazaguanine (preQ1-tRNA) to give epoxyqueuosine (oQ-tRNA). The sequence is that of S-adenosylmethionine:tRNA ribosyltransferase-isomerase from Bordetella parapertussis (strain 12822 / ATCC BAA-587 / NCTC 13253).